We begin with the raw amino-acid sequence, 67 residues long: uncharacterized protein (67 aa).

The helical transmembrane segment at 19–39 (ISFIIFFFFYFFFFYFFYGFW) threads the bilayer.

The protein localises to the membrane. This is an uncharacterized protein from Dictyostelium discoideum (Social amoeba).